A 101-amino-acid chain; its full sequence is Urease subunit beta (101 aa).

Belongs to the urease beta subunit family. As to quaternary structure, heterotrimer of UreA (gamma), UreB (beta) and UreC (alpha) subunits. Three heterotrimers associate to form the active enzyme.

It localises to the cytoplasm. It carries out the reaction urea + 2 H2O + H(+) = hydrogencarbonate + 2 NH4(+). The protein operates within nitrogen metabolism; urea degradation; CO(2) and NH(3) from urea (urease route): step 1/1. This chain is Urease subunit beta, found in Verminephrobacter eiseniae (strain EF01-2).